The sequence spans 356 residues: Protein RecA (356 aa).

Residue 68 to 75 (GQESSGKT) coordinates ATP.

The protein belongs to the RecA family.

The protein localises to the cytoplasm. Functionally, can catalyze the hydrolysis of ATP in the presence of single-stranded DNA, the ATP-dependent uptake of single-stranded DNA by duplex DNA, and the ATP-dependent hybridization of homologous single-stranded DNAs. It interacts with LexA causing its activation and leading to its autocatalytic cleavage. This Thermotoga sp. (strain RQ2) protein is Protein RecA.